Reading from the N-terminus, the 249-residue chain is Isoprenyl transferase (249 aa).

Asp25 is a catalytic residue. Asp25 provides a ligand contact to Mg(2+). Substrate is bound by residues 26–29 (GNGR), Trp30, Arg38, His42, and 70–72 (STE). Asn73 functions as the Proton acceptor in the catalytic mechanism. Residues Trp74, Arg76, Arg197, and 203-205 (RLS) contribute to the substrate site. Residue Glu216 coordinates Mg(2+).

Belongs to the UPP synthase family. Homodimer. The cofactor is Mg(2+).

In terms of biological role, catalyzes the condensation of isopentenyl diphosphate (IPP) with allylic pyrophosphates generating different type of terpenoids. The chain is Isoprenyl transferase from Streptococcus thermophilus (strain CNRZ 1066).